Reading from the N-terminus, the 253-residue chain is Phosphoadenosine 5'-phosphosulfate reductase (253 aa).

Cys-239 acts as the Nucleophile; cysteine thiosulfonate intermediate in catalysis.

The protein belongs to the PAPS reductase family. CysH subfamily.

The protein resides in the cytoplasm. It catalyses the reaction [thioredoxin]-disulfide + sulfite + adenosine 3',5'-bisphosphate + 2 H(+) = [thioredoxin]-dithiol + 3'-phosphoadenylyl sulfate. The protein operates within sulfur metabolism; hydrogen sulfide biosynthesis; sulfite from sulfate: step 3/3. Its function is as follows. Catalyzes the formation of sulfite from phosphoadenosine 5'-phosphosulfate (PAPS) using thioredoxin as an electron donor. The chain is Phosphoadenosine 5'-phosphosulfate reductase from Aliivibrio fischeri (strain ATCC 700601 / ES114) (Vibrio fischeri).